We begin with the raw amino-acid sequence, 198 residues long: Angiopoietin-like protein 8 (198 aa).

Residues 1-15 (MAVLALCLLWTLASA) form the signal peptide.

This sequence belongs to the ANGPTL8 family. Interacts with ANGPTL3. In terms of processing, proteolytically cleaved at the N-terminus. Expressed in liver and fat. Enriched in white and brown adipose tissues.

Its subcellular location is the secreted. Functionally, hormone that acts as a blood lipid regulator by regulating serum triglyceride levels. May be involved in the metabolic transition between fasting and refeeding: required to direct fatty acids to adipose tissue for storage in the fed state. According to a report, may act by promoting ANGPTL3 cleavage. According to another study, not required for cleavage of ANGPTL3. The chain is Angiopoietin-like protein 8 from Mus musculus (Mouse).